Reading from the N-terminus, the 1456-residue chain is Alpha-2-macroglobulin-like protein 1 (1456 aa).

A signal peptide spans 1-19 (MVPTILLSALLLHFTDVVA). N48, N172, and N868 each carry an N-linked (GlcNAc...) asparagine glycan.

The protein belongs to the protease inhibitor I39 (alpha-2-macroglobulin) family. In terms of assembly, homotetramer; consists of two dimer pairs that are disulfide-linked. Part of a complex composed of complement component C3, CLCA1/CLCA3, A2ML1/OH and ALB/serum albumin.

The protein localises to the secreted. Inhibits protease gelatinolytic complex activity against type 1 collagen. The polypeptide is Alpha-2-macroglobulin-like protein 1 (Mus musculus (Mouse)).